Here is a 268-residue protein sequence, read N- to C-terminus: Chymotrypsin-C (268 aa).

Residues 1-16 form the signal peptide; sequence MLGITVLAAILACASC. A propeptide spans 17–29 (activation peptide); the sequence is CGNPAFPPNLSTR. Cystine bridges form between Cys17–Cys141, Cys59–Cys75, Cys155–Cys222, Cys186–Cys202, and Cys212–Cys243. An N-linked (GlcNAc...) asparagine glycan is attached at Asn25. The Peptidase S1 domain occupies 30–267; the sequence is VVGGEDAVPN…YNDWINEKIQ (238 aa). Residue His74 is the Charge relay system of the active site. N-linked (GlcNAc...) asparagine glycosylation occurs at Asn90. Asp121 functions as the Charge relay system in the catalytic mechanism. Catalysis depends on Ser216, which acts as the Charge relay system.

This sequence belongs to the peptidase S1 family. Elastase subfamily. Pancreas.

The enzyme catalyses Preferential cleavage: Leu-|-Xaa, Tyr-|-Xaa, Phe-|-Xaa, Met-|-Xaa, Trp-|-Xaa, Gln-|-Xaa, Asn-|-Xaa.. Its function is as follows. Regulates activation and degradation of trypsinogens and procarboxypeptidases by targeting specific cleavage sites within their zymogen precursors. Has chymotrypsin-type protease activity and hypocalcemic activity. Cleaves TRY4 and TRY5 and thereby inhibits their autoactivation. The polypeptide is Chymotrypsin-C (Ctrc) (Rattus norvegicus (Rat)).